The sequence spans 224 residues: Thiamine-phosphate synthase (224 aa).

4-amino-2-methyl-5-(diphosphooxymethyl)pyrimidine-binding positions include 44 to 48 (QFREK) and N79. Mg(2+) contacts are provided by D80 and D99. 4-amino-2-methyl-5-(diphosphooxymethyl)pyrimidine is bound at residue S117. Position 143-145 (143-145 (TST)) interacts with 2-[(2R,5Z)-2-carboxy-4-methylthiazol-5(2H)-ylidene]ethyl phosphate. A 4-amino-2-methyl-5-(diphosphooxymethyl)pyrimidine-binding site is contributed by K146. Residues G175 and 195–196 (IS) contribute to the 2-[(2R,5Z)-2-carboxy-4-methylthiazol-5(2H)-ylidene]ethyl phosphate site.

This sequence belongs to the thiamine-phosphate synthase family. The cofactor is Mg(2+).

The enzyme catalyses 2-[(2R,5Z)-2-carboxy-4-methylthiazol-5(2H)-ylidene]ethyl phosphate + 4-amino-2-methyl-5-(diphosphooxymethyl)pyrimidine + 2 H(+) = thiamine phosphate + CO2 + diphosphate. The catalysed reaction is 2-(2-carboxy-4-methylthiazol-5-yl)ethyl phosphate + 4-amino-2-methyl-5-(diphosphooxymethyl)pyrimidine + 2 H(+) = thiamine phosphate + CO2 + diphosphate. It catalyses the reaction 4-methyl-5-(2-phosphooxyethyl)-thiazole + 4-amino-2-methyl-5-(diphosphooxymethyl)pyrimidine + H(+) = thiamine phosphate + diphosphate. Its pathway is cofactor biosynthesis; thiamine diphosphate biosynthesis; thiamine phosphate from 4-amino-2-methyl-5-diphosphomethylpyrimidine and 4-methyl-5-(2-phosphoethyl)-thiazole: step 1/1. Condenses 4-methyl-5-(beta-hydroxyethyl)thiazole monophosphate (THZ-P) and 2-methyl-4-amino-5-hydroxymethyl pyrimidine pyrophosphate (HMP-PP) to form thiamine monophosphate (TMP). The protein is Thiamine-phosphate synthase of Bacillus cereus (strain ATCC 10987 / NRS 248).